We begin with the raw amino-acid sequence, 144 residues long: Large ribosomal subunit protein uL15 (144 aa).

A disordered region spans residues 1–57; that stretch reads MELNNLKPAEGSKHAKRRVGRGIGSGLGKTAGRGHKGQKSRSGGFHKVGFEGGQMPL. Positions 21–31 are enriched in gly residues; it reads RGIGSGLGKTA.

This sequence belongs to the universal ribosomal protein uL15 family. In terms of assembly, part of the 50S ribosomal subunit.

Functionally, binds to the 23S rRNA. The protein is Large ribosomal subunit protein uL15 of Paraburkholderia phytofirmans (strain DSM 17436 / LMG 22146 / PsJN) (Burkholderia phytofirmans).